A 305-amino-acid polypeptide reads, in one-letter code: tRNA pseudouridine synthase B (305 aa).

The active-site Nucleophile is the aspartate 48.

It belongs to the pseudouridine synthase TruB family. Type 1 subfamily.

It catalyses the reaction uridine(55) in tRNA = pseudouridine(55) in tRNA. Its function is as follows. Responsible for synthesis of pseudouridine from uracil-55 in the psi GC loop of transfer RNAs. This is tRNA pseudouridine synthase B from Pseudomonas putida (strain GB-1).